The following is a 604-amino-acid chain: Siderophore iron transporter mirB (604 aa).

Residues 1–61 are disordered; the sequence is MTIGSKFSLL…DNSSDEALPS (61 aa). Transmembrane regions (helical) follow at residues 73–95, 115–137, 149–168, 178–200, 207–224, 237–259, 289–311, 326–343, 363–385, 400–422, 427–449, 454–476, 489–511, and 566–588; these read AVTL…LVTL, FQSH…ALYI, AEGW…MMAA, ADVF…AADI, GIAF…AFAG, WRWG…YFVL, YFFA…FLLP, YIIA…LFVL, TVLG…NSYF, AGYV…GFAI, YFRW…MIHF, QYIG…FVLL, YVAA…GNAI, and AQAR…MFMV.

It belongs to the major facilitator superfamily.

The protein resides in the membrane. Involved in the transport of siderophore triacestylfusarinine C and so has a role in iron homeostasis. In Emericella nidulans (strain FGSC A4 / ATCC 38163 / CBS 112.46 / NRRL 194 / M139) (Aspergillus nidulans), this protein is Siderophore iron transporter mirB (mirB).